The following is a 479-amino-acid chain: Replication factor C large subunit (479 aa).

56–63 (GPPGVGKT) is an ATP binding site. Basic and acidic residues predominate over residues 435-461 (LGEKPLEPQEAKARRRGEKASRDEGRK). The tract at residues 435 to 479 (LGEKPLEPQEAKARRRGEKASRDEGRKAGKRERKGVGLDFFLGEQ) is disordered.

The protein belongs to the activator 1 small subunits family. RfcL subfamily. Heteromultimer composed of small subunits (RfcS) and large subunits (RfcL).

Its function is as follows. Part of the RFC clamp loader complex which loads the PCNA sliding clamp onto DNA. This is Replication factor C large subunit from Aeropyrum pernix (strain ATCC 700893 / DSM 11879 / JCM 9820 / NBRC 100138 / K1).